The following is an 881-amino-acid chain: Alanine--tRNA ligase (881 aa).

Positions 568, 572, 670, and 674 each coordinate Zn(2+).

It belongs to the class-II aminoacyl-tRNA synthetase family. It depends on Zn(2+) as a cofactor.

Its subcellular location is the cytoplasm. The enzyme catalyses tRNA(Ala) + L-alanine + ATP = L-alanyl-tRNA(Ala) + AMP + diphosphate. In terms of biological role, catalyzes the attachment of alanine to tRNA(Ala) in a two-step reaction: alanine is first activated by ATP to form Ala-AMP and then transferred to the acceptor end of tRNA(Ala). Also edits incorrectly charged Ser-tRNA(Ala) and Gly-tRNA(Ala) via its editing domain. This chain is Alanine--tRNA ligase, found in Clostridium acetobutylicum (strain ATCC 824 / DSM 792 / JCM 1419 / IAM 19013 / LMG 5710 / NBRC 13948 / NRRL B-527 / VKM B-1787 / 2291 / W).